Here is a 94-residue protein sequence, read N- to C-terminus: DNA-binding protein HU (94 aa).

This sequence belongs to the bacterial histone-like protein family. As to quaternary structure, homodimer.

Its function is as follows. Histone-like DNA-binding protein which is capable of wrapping DNA to stabilize it, and thus to prevent its denaturation under extreme environmental conditions. It is essential for heterocyst differentiation. This Nostoc sp. (strain PCC 7120 / SAG 25.82 / UTEX 2576) protein is DNA-binding protein HU (hup).